A 325-amino-acid chain; its full sequence is Tetraacyldisaccharide 4'-kinase (325 aa).

Position 55 to 62 (55 to 62 (TAGGNGKT)) interacts with ATP.

The protein belongs to the LpxK family.

It catalyses the reaction a lipid A disaccharide + ATP = a lipid IVA + ADP + H(+). It functions in the pathway glycolipid biosynthesis; lipid IV(A) biosynthesis; lipid IV(A) from (3R)-3-hydroxytetradecanoyl-[acyl-carrier-protein] and UDP-N-acetyl-alpha-D-glucosamine: step 6/6. Transfers the gamma-phosphate of ATP to the 4'-position of a tetraacyldisaccharide 1-phosphate intermediate (termed DS-1-P) to form tetraacyldisaccharide 1,4'-bis-phosphate (lipid IVA). This Salmonella dublin (strain CT_02021853) protein is Tetraacyldisaccharide 4'-kinase.